The primary structure comprises 264 residues: ORC1-type DNA replication protein 2 (264 aa).

ATP-binding positions include 73-77, tyrosine 220, and arginine 232; that span reads TGKSL.

This sequence belongs to the CDC6/cdc18 family.

Involved in regulation of DNA replication. This is ORC1-type DNA replication protein 2 (orc2) from Halobacterium salinarum (strain ATCC 700922 / JCM 11081 / NRC-1) (Halobacterium halobium).